The primary structure comprises 79 residues: UPF0291 protein BH2353 (79 aa).

Positions G57–H79 are disordered. The span at T63–H79 shows a compositional bias: basic and acidic residues.

Belongs to the UPF0291 family.

The protein localises to the cytoplasm. This Halalkalibacterium halodurans (strain ATCC BAA-125 / DSM 18197 / FERM 7344 / JCM 9153 / C-125) (Bacillus halodurans) protein is UPF0291 protein BH2353.